A 306-amino-acid chain; its full sequence is Methionyl-tRNA formyltransferase (306 aa).

A (6S)-5,6,7,8-tetrahydrofolate-binding site is contributed by 110-113 (SLLP).

The protein belongs to the Fmt family.

The enzyme catalyses L-methionyl-tRNA(fMet) + (6R)-10-formyltetrahydrofolate = N-formyl-L-methionyl-tRNA(fMet) + (6S)-5,6,7,8-tetrahydrofolate + H(+). In terms of biological role, attaches a formyl group to the free amino group of methionyl-tRNA(fMet). The formyl group appears to play a dual role in the initiator identity of N-formylmethionyl-tRNA by promoting its recognition by IF2 and preventing the misappropriation of this tRNA by the elongation apparatus. This chain is Methionyl-tRNA formyltransferase, found in Brucella abortus (strain S19).